Reading from the N-terminus, the 313-residue chain is MSQRDTLVHLFAGGCGGTVGAILTCPLEVVKTRLQSSSVTLYISEVHLNTVNGASVNRVTRVSPGPLHCLKMILQKEGPRSLFRGLGPNLVGVAPSRAIYFAAYSNCKEKLNNIFNPDSTQVHMISAGVAGFTAITMTNPIWLVKTRLQLDARNRGEKRMSAFECVRKVYRSDGIKGFYRGMSASYAGISETVIHFVIYESIKRKLLEHKTASAMDSEDESAKEASDFVGMMMAAATSKTCATSIAYPHEVVRTRLREEGTKYRSFFQTLSLLVREEGYGSLYRGLTTHLVRQIPNTAIMMSTYEVVVYLLDG.

Solcar repeat units follow at residues 4–110 (RDTL…CKEK), 118–205 (DSTQ…IKRK), and 226–310 (SDFV…VVYL). The next 6 helical transmembrane spans lie at 7–27 (LVHL…TCPL), 41–57 (LYIS…ASVN), 113–133 (NIFN…AGFT), 182–202 (MSAS…YESI), 228–248 (FVGM…IAYP), and 293–313 (QIPN…LLDG).

It belongs to the mitochondrial carrier (TC 2.A.29) family.

It localises to the mitochondrion inner membrane. In terms of biological role, mitochondrial transporter that imports/exports pyrimidine nucleotides into and from mitochondria. Transports preferentially cytosine and uracil (deoxy)nucleoside mono-, di-, and triphosphates by uniport and antiport mechanism. In Gallus gallus (Chicken), this protein is Solute carrier family 25 member 36 (SLC25A36).